The primary structure comprises 182 residues: Adenylate kinase (182 aa).

12 to 17 (GAGKGT) contributes to the ATP binding site. The interval 32–61 (STGDLLRTEVGAKTPLGQEAAAVMNRGELV) is NMP. AMP contacts are provided by residues Thr-33, Arg-38, 59–61 (ELV), 85–88 (GFPR), and Gln-92. Residues 126-132 (SRGRSDD) are LID. Position 127 (Arg-127) interacts with ATP. Positions 129 and 140 each coordinate AMP. Position 168 (Gly-168) interacts with ATP.

The protein belongs to the adenylate kinase family. As to quaternary structure, monomer.

The protein resides in the cytoplasm. The enzyme catalyses AMP + ATP = 2 ADP. It functions in the pathway purine metabolism; AMP biosynthesis via salvage pathway; AMP from ADP: step 1/1. In terms of biological role, catalyzes the reversible transfer of the terminal phosphate group between ATP and AMP. Plays an important role in cellular energy homeostasis and in adenine nucleotide metabolism. This chain is Adenylate kinase, found in Prochlorococcus marinus (strain MIT 9313).